The primary structure comprises 439 residues: Omega-aminotransferase (439 aa).

112–113 contributes to the pyridoxal 5'-phosphate binding site; it reads GS. At Lys281 the chain carries N6-(pyridoxal phosphate)lysine. Thr318 is a binding site for pyridoxal 5'-phosphate.

It belongs to the class-III pyridoxal-phosphate-dependent aminotransferase family. In terms of assembly, homotetramer. Pyridoxal 5'-phosphate is required as a cofactor.

The enzyme catalyses 3-oxopropanoate + L-alanine = beta-alanine + pyruvate. It carries out the reaction 3-aminobutanoate + pyruvate = acetoacetate + L-alanine. It catalyses the reaction benzylamine + pyruvate = benzaldehyde + L-alanine. The catalysed reaction is (S)-1-phenylethylamine + pyruvate = acetophenone + L-alanine. The enzyme catalyses 2-phenylethylamine + pyruvate = 2-phenylacetaldehyde + L-alanine. It carries out the reaction 1-phenylpropylamine + pyruvate = 1-phenylpropan-1-one + L-alanine. It catalyses the reaction 3-phenylpropylamine + pyruvate = 3-phenylpropanal + L-alanine. Its function is as follows. Aminotransferase that can use beta-amino acids, aliphatic amines, or aromatic amines as amino donors, and pyruvate as amino acceptor. Shows high activity for short-chain beta-amino acids, with the highest activity for 3-aminobutanoate and beta-alanine in vitro. Displays higher activity toward aromatic amines than aliphatic amines. May be involved in beta-alanine biosynthesis and/or degradation. The protein is Omega-aminotransferase of Caulobacter vibrioides (strain ATCC 19089 / CIP 103742 / CB 15) (Caulobacter crescentus).